Reading from the N-terminus, the 219-residue chain is PKHD-type hydroxylase Mmar10_1675 (219 aa).

Positions 77-171 (TLSRILVSRY…RVAVVGWVRS (95 aa)) constitute a Fe2OG dioxygenase domain. Fe cation is bound by residues H95, D97, and H152. R162 lines the 2-oxoglutarate pocket.

Fe(2+) serves as cofactor. The cofactor is L-ascorbate.

The protein is PKHD-type hydroxylase Mmar10_1675 of Maricaulis maris (strain MCS10) (Caulobacter maris).